The following is a 269-amino-acid chain: MTHLERSRHQLFPFHLVSPSPWPITVSFALMSFALSLGLTMHGYIVGNSVLFTSIILVLYSMTMWFRDIIAEGTYLGDHTLAVRKGLNYGFLLFVVSEILIFAGIFWAYFHSAMSPAIEIGGVWPPVGITAIGATELPLLNTIILLASGATITYSHHATIEGNRNHALNGLFITLWLIVIFVVCQYIEYTNAPFTISDGVYGSVFFAGTGLHFLHMGMLIIMLAVCYWRMRQYHFTTGHHVNYETTILYLHVLDVIWLFLYIVMYWWGA.

Helical transmembrane passes span 21-41, 45-65, 90-110, 127-147, 167-187, 204-224, and 247-267; these read PWPITVSFALMSFALSLGLTM, IVGNSVLFTSIILVLYSMTMW, GFLLFVVSEILIFAGIFWAYF, VGITAIGATELPLLNTIILLA, ALNGLFITLWLIVIFVVCQYI, VFFAGTGLHFLHMGMLIIMLA, and ILYLHVLDVIWLFLYIVMYWW.

This sequence belongs to the cytochrome c oxidase subunit 3 family. Component of the cytochrome c oxidase (complex IV, CIV), a multisubunit enzyme composed of a catalytic core of 3 subunits and several supernumerary subunits. The complex exists as a monomer or a dimer and forms supercomplexes (SCs) in the inner mitochondrial membrane with ubiquinol-cytochrome c oxidoreductase (cytochrome b-c1 complex, complex III, CIII).

The protein resides in the mitochondrion inner membrane. The catalysed reaction is 4 Fe(II)-[cytochrome c] + O2 + 8 H(+)(in) = 4 Fe(III)-[cytochrome c] + 2 H2O + 4 H(+)(out). Its function is as follows. Component of the cytochrome c oxidase, the last enzyme in the mitochondrial electron transport chain which drives oxidative phosphorylation. The respiratory chain contains 3 multisubunit complexes succinate dehydrogenase (complex II, CII), ubiquinol-cytochrome c oxidoreductase (cytochrome b-c1 complex, complex III, CIII) and cytochrome c oxidase (complex IV, CIV), that cooperate to transfer electrons derived from NADH and succinate to molecular oxygen, creating an electrochemical gradient over the inner membrane that drives transmembrane transport and the ATP synthase. Cytochrome c oxidase is the component of the respiratory chain that catalyzes the reduction of oxygen to water. Electrons originating from reduced cytochrome c in the intermembrane space (IMS) are transferred via the dinuclear copper A center (CU(A)) of subunit 2 and heme A of subunit 1 to the active site in subunit 1, a binuclear center (BNC) formed by heme A3 and copper B (CU(B)). The BNC reduces molecular oxygen to 2 water molecules using 4 electrons from cytochrome c in the IMS and 4 protons from the mitochondrial matrix. In Wickerhamomyces canadensis (Yeast), this protein is Cytochrome c oxidase subunit 3 (COX3).